Reading from the N-terminus, the 501-residue chain is Sucrose transport protein SUT2 (501 aa).

Topologically, residues 1–31 are cytoplasmic; it reads MPRRPSGGGGGAGPAAAAVRKVPLRKLLRAA. A helical transmembrane segment spans residues 32 to 52; the sequence is SVACGVQFGWALQLSLLTPYV. The Extracellular portion of the chain corresponds to 53–55; that stretch reads QEL. The helical transmembrane segment at 56–76 threads the bilayer; that stretch reads GIPHAFASLVWLCGPLSGLLV. Residues 77–98 lie on the Cytoplasmic side of the membrane; that stretch reads QPLVGHLSDRIAPAASPLGRRR. A helical membrane pass occupies residues 99-119; it reads PFIAAGAASIAAAVLTVGFSA. Topologically, residues 120 to 135 are extracellular; the sequence is DLGRIFGDSITPGSTR. The helical transmembrane segment at 136-156 threads the bilayer; the sequence is LGAIIVYLVGFWLLDVGNNAT. Topologically, residues 157 to 176 are cytoplasmic; it reads QGPCRAFLADLTENDPRRTR. Residues 177–197 form a helical membrane-spanning segment; it reads IANAYFSLFMALGNILGYATG. Topologically, residues 198 to 222 are extracellular; sequence AYSGWYKIFPFTVTPSCSISCANLK. A helical membrane pass occupies residues 223-243; sequence SAFLLDIIILVVTTCITVASV. Over 244–278 the chain is Cytoplasmic; that stretch reads QEPQSFGSDEADHPSTEQEAFLWELFGSFRYFTLP. A helical membrane pass occupies residues 279–299; that stretch reads VWMVLIVTALTWIGWFPFILF. Residues 300-327 are Extracellular-facing; sequence DTDWMGREIYRGSPDDPSITQSYHDGVR. A helical membrane pass occupies residues 328-348; the sequence is MGSFGLMLNSVLLGFTSIVLE. The Cytoplasmic portion of the chain corresponds to 349–356; it reads KLCRKWGA. The chain crosses the membrane as a helical span at residues 357–377; that stretch reads GLVWGVSNILMALCFVAMLVI. At 378-394 the chain is on the extracellular side; sequence TYVAKNMDYPPSGVPPT. The helical transmembrane segment at 395 to 415 threads the bilayer; the sequence is GIVIASLVVFTILGAPLAITY. The Cytoplasmic segment spans residues 416–433; the sequence is SIPYAMAASRVENLGLGQ. A helical transmembrane segment spans residues 434-454; that stretch reads GLAMGILNLAIVIPQVIVSLG. Topologically, residues 455–467 are extracellular; it reads SGPWDQLFGGGNA. The chain crosses the membrane as a helical span at residues 468–488; that stretch reads PAFAVAAAASFIGGLVAILGL. The Cytoplasmic portion of the chain corresponds to 489–501; that stretch reads PRARIASRRRGHR.

This sequence belongs to the glycoside-pentoside-hexuronide (GPH) cation symporter transporter (TC 2.A.2.4) family. Homodimer. As to expression, widely expressed.

Its subcellular location is the cell membrane. The protein operates within glycan biosynthesis; sucrose metabolism. In terms of biological role, responsible for the transport of sucrose into the cell, with the concomitant uptake of protons (symport system). May also transport other glucosides. The sequence is that of Sucrose transport protein SUT2 (SUT2) from Oryza sativa subsp. japonica (Rice).